The primary structure comprises 275 residues: Putative hydro-lyase SPO1111 (275 aa).

Belongs to the D-glutamate cyclase family.

The sequence is that of Putative hydro-lyase SPO1111 from Ruegeria pomeroyi (strain ATCC 700808 / DSM 15171 / DSS-3) (Silicibacter pomeroyi).